Consider the following 1188-residue polypeptide: MKKKQTVQGTFSKLFGKKHTTTPSTSLYATNPPWIFTQEAPEEGTGGFDGIYYGDNRFNTVSESGTATLKARPRVRPLLTFLPLNAQENHGLAVPTPSVPDDFADKEVTGTSSLVNGNLRLYSSVGDLRPGQYGQDLLIPPPPPGPAPGPPQDISEPPGGSPLPSPPSTAPPPPPLLLEPPPPPSMAPPPPPVLEALSPPHTLSSPSIPTPPDFIPPAPPLAFLAPPPPPVPAPAPPAPASPHTVGTRLFPPGGVTKWKSDVALNGRQAEATRASPPRSPAEPKGSALGPNPEPHLTFPRSFKVPPPTPVRTSSIPVQEAQEAPRKEEGATKKAPSRLPLPPSFHIRPASQVYPDRAPEPDCPGELKATAPASPRLGQSQSQADERAGTPPPAPPLPPPAPPLPPPAPPLPPAAPPLPCAQKAAHPPAGFTKTPKSSSPALKPKPNPPSPENTASSAPVDWRDPSQMEKLRNELAAYLCGSRREDRFLSHRPGPTVAPQSKEGKKGPRLPEKETLLSLPAKDTPPGVPEKSLGGSSLTETEAAPSLTLPSVDYIPQDSPTPSVRQIRNELEARLSSAAEKEAKPSIGSLPPKPRLEGGRICENGADDDKLSKPVAKNLPPQSTTLLPTTSLQPKAMLGPAIPPKATPEPAIPPKATLWPATPPKATLGPATPLKATSGPTTPLKATSGPAIASTATTLPTTTSQLMAEKDSGPAGQPEKPASQEVSTPSQARGEGSPSEATRLPTQGARSSAAFPPKTSPGGGEVPCLYKPHCHQSSLSREVAVVMPTLARGGAAGPGEPVEVKEPPGLPAKPPASAQPTDELLRHPVTGEVVERGSPMALLLAARQRAQKGRSVGAALGRSSLPGSLRDHSHQAEASSDSIFHSQGTPNSFTVVPKLPKEAEKDSPLTTEIPNKWGPRLGRDAEGTELSRRHNWTKPEPQAPVAWERVAPSNLPQGHPLPKSFSSPPSPSNKREEEEEEFNFEVIPPPPEFSNDPEPPAPALQYLGRQSSPPRNNYSDLRQLPNAGPGAPPALGFSRFPAGARYAGAGGLERFSGGGRSLIKKRLYVGEPHRGPGLPHGGTGRSLSSPNCFGPQPGGPEMRRVNSAGRAPPGGLHAPRLSLEGAARGAAEAKHKAPGSADYGFAPAAGRSPYTTTRYGSPINTFTVRPGTRHPISYVCSGAHRKATS.

4 disordered regions span residues 126 to 468, 484 to 771, 790 to 823, and 847 to 1039; these read GDLR…SQME, EDRF…LYKP, ARGGAAGPGEPVEVKEPPGLPAKPPASAQPTDEL, and QRAQ…FSRF. Composition is skewed to pro residues over residues 139–151, 159–193, and 208–240; these read IPPPPPGPAPGPP, GGSPLPSPPSTAPPPPPLLLEPPPPPSMAPPPPPV, and IPTPPDFIPPAPPLAFLAPPPPPVPAPAPPAPA. The residue at position 260 (Ser-260) is a Phosphoserine. Basic and acidic residues predominate over residues 322–331; that stretch reads EAPRKEEGAT. The segment covering 389–418 has biased composition (pro residues); sequence TPPPAPPLPPPAPPLPPPAPPLPPAAPPLP. Low complexity predominate over residues 432–441; it reads KTPKSSSPAL. Basic and acidic residues-rich tracts occupy residues 501-514 and 566-583; these read KEGKKGPRLPEKET and IRNELEARLSSAAEKEAK. A compositionally biased stretch (low complexity) spans 618-633; the sequence is LPPQSTTLLPTTSLQP. The segment covering 640–652 has biased composition (pro residues); it reads AIPPKATPEPAIP. Position 666 is a phosphothreonine (Thr-666). Positions 689–703 are enriched in low complexity; sequence PAIASTATTLPTTTS. The span at 875 to 893 shows a compositional bias: polar residues; the sequence is AEASSDSIFHSQGTPNSFT. The span at 920–931 shows a compositional bias: basic and acidic residues; the sequence is LGRDAEGTELSR. Positions 986–1001 are enriched in pro residues; sequence IPPPPEFSNDPEPPAP. Residues 1007–1019 are compositionally biased toward polar residues; the sequence is GRQSSPPRNNYSD. Residues 1026–1035 are compositionally biased toward low complexity; sequence AGPGAPPALG. Arg-1044 is modified (asymmetric dimethylarginine). Residues 1069-1160 form a disordered region; sequence GEPHRGPGLP…SPYTTTRYGS (92 aa). Omega-N-methylarginine occurs at positions 1073 and 1084. The residue at position 1157 (Arg-1157) is an Asymmetric dimethylarginine.

This is an uncharacterized protein from Homo sapiens (Human).